Consider the following 344-residue polypeptide: Phosphate acyltransferase (344 aa).

The protein belongs to the PlsX family. In terms of assembly, homodimer. Probably interacts with PlsY.

Its subcellular location is the cytoplasm. The enzyme catalyses a fatty acyl-[ACP] + phosphate = an acyl phosphate + holo-[ACP]. It functions in the pathway lipid metabolism; phospholipid metabolism. Functionally, catalyzes the reversible formation of acyl-phosphate (acyl-PO(4)) from acyl-[acyl-carrier-protein] (acyl-ACP). This enzyme utilizes acyl-ACP as fatty acyl donor, but not acyl-CoA. The polypeptide is Phosphate acyltransferase (Yersinia pestis bv. Antiqua (strain Antiqua)).